Here is a 1036-residue protein sequence, read N- to C-terminus: Beta-galactosidase (1036 aa).

2 residues coordinate substrate: N97 and D197. D197 is a Na(+) binding site. Mg(2+) is bound by residues E411, H413, and E456. Substrate-binding positions include E456 and 532–535; that span reads EYAH. The active-site Proton donor is the E456. Residue E532 is the Nucleophile of the active site. Residue N592 participates in Mg(2+) binding. Na(+) contacts are provided by F596 and D599. Substrate-binding residues include D599 and W1006.

Belongs to the glycosyl hydrolase 2 family. Homotetramer. It depends on Mg(2+) as a cofactor. The cofactor is Na(+).

The catalysed reaction is Hydrolysis of terminal non-reducing beta-D-galactose residues in beta-D-galactosides.. The chain is Beta-galactosidase from Leuconostoc mesenteroides subsp. mesenteroides (strain ATCC 8293 / DSM 20343 / BCRC 11652 / CCM 1803 / JCM 6124 / NCDO 523 / NBRC 100496 / NCIMB 8023 / NCTC 12954 / NRRL B-1118 / 37Y).